A 171-amino-acid polypeptide reads, in one-letter code: MSRPRVFFDITIAGKPTGRIVMELYNDIVPKTAENFRALCTGEKGVGKSGKPLHFKGSKFHRIIPEFMIQGGDFTRGNGTGGESIYGEKFPDENFKEKHTGPGVLSMANAGPNTNGSQFFLCTVKTAWLDGKHVVFGRVVEGLDIVSKVEGNGSSSGTPKSECLIADCGQL.

The PPIase cyclophilin-type domain occupies 7–170 (FFDITIAGKP…SECLIADCGQ (164 aa)).

The protein belongs to the cyclophilin-type PPIase family.

The catalysed reaction is [protein]-peptidylproline (omega=180) = [protein]-peptidylproline (omega=0). Functionally, PPIases accelerate the folding of proteins. It catalyzes the cis-trans isomerization of proline imidic peptide bonds in oligopeptides. The chain is Peptidyl-prolyl cis-trans isomerase 7 (cyn-7) from Caenorhabditis elegans.